A 374-amino-acid polypeptide reads, in one-letter code: Hydroxylysine kinase (374 aa).

Residue D228 is the Proton acceptor of the active site.

It belongs to the aminoglycoside phosphotransferase family.

It localises to the cytoplasm. It carries out the reaction (5R)-5-hydroxy-L-lysine + GTP = (5R)-5-phosphooxy-L-lysine + GDP + H(+). Its function is as follows. Catalyzes the GTP-dependent phosphorylation of 5-hydroxy-L-lysine. The chain is Hydroxylysine kinase (hykk) from Xenopus laevis (African clawed frog).